A 1938-amino-acid polypeptide reads, in one-letter code: Myosin-1 (1938 aa).

A Myosin N-terminal SH3-like domain is found at 33–82 (DAKTSVFVADPKESFVKATVQSREGGKVTAKTEAGATVTVKEDQCFPMNP). T64 and T69 each carry phosphothreonine. The Myosin motor domain occupies 86–781 (DKIEDMAMMT…LLGLLEEMRD (696 aa)). K130 bears the N6,N6,N6-trimethyllysine mark. Residue 179–186 (GESGAGKT) coordinates ATP. Residue Y389 is modified to Phosphotyrosine. Residue T419 is modified to Phosphothreonine. Y424 carries the phosphotyrosine modification. S625 bears the Phosphoserine mark. The interval 658-680 (LNKLMTNLRSTHPHFVRCIIPNE) is actin-binding. H756 carries the pros-methylhistidine modification. Positions 760–774 (KFGHTKVFFKAGLLG) are actin-binding. The region spanning 784-813 (LAQIITRTQARCRGFLARVEYQRMVERRES) is the IQ domain. The stretch at 842–1938 (LLKSAETEKE…EVHTKIISEE (1097 aa)) forms a coiled coil. 2 positions are modified to phosphoserine: S1091 and S1095. Disordered regions lie at residues 1124-1146 (EIEA…SREL) and 1152-1171 (RLEE…KKRE). Positions 1127-1146 (AERASRAKAEKQRSDLSREL) are enriched in basic and acidic residues. A phosphoserine mark is found at S1161 and S1236. T1240 carries the phosphothreonine modification. A Phosphoserine modification is found at S1242. Position 1254 is a phosphothreonine (T1254). S1260 is subject to Phosphoserine. Residue T1285 is modified to Phosphothreonine. Residues S1291, S1302, and S1305 each carry the phosphoserine modification. Position 1463 is a phosphotyrosine (Y1463). The residue at position 1466 (T1466) is a Phosphothreonine. S1473 carries the post-translational modification Phosphoserine. Position 1491 is a phosphotyrosine (Y1491). S1494 is modified (phosphoserine). A Phosphothreonine modification is found at T1500. The residue at position 1513 (S1513) is a Phosphoserine. A Phosphothreonine modification is found at T1516. Phosphoserine is present on residues S1541, S1553, S1573, S1713, and S1725. Phosphothreonine occurs at positions 1729 and 1735. S1738 is subject to Phosphoserine.

Belongs to the TRAFAC class myosin-kinesin ATPase superfamily. Myosin family. In terms of assembly, muscle myosin is a hexameric protein that consists of 2 heavy chain subunits (MHC), 2 alkali light chain subunits (MLC) and 2 regulatory light chain subunits (MLC-2). Interacts with SLC26A5.

It localises to the cytoplasm. The protein localises to the myofibril. In terms of biological role, required for normal hearing. It plays a role in cochlear amplification of auditory stimuli, likely through the positive regulation of prestin (SLC26A5) activity and outer hair cell (OHC) electromotility. The polypeptide is Myosin-1 (MYH1) (Equus caballus (Horse)).